The primary structure comprises 394 residues: Aromatic aminotransferase ISS1 (394 aa).

Gly-2 is subject to N-acetylglycine. Gly-38 contributes to the substrate binding site. Pyridoxal 5'-phosphate contacts are provided by residues Tyr-64, 98-99 (AN), Tyr-123, Asn-176, Tyr-207, and 230-232 (SFS). 2 residues coordinate substrate: Tyr-123 and Asn-176. Lys-233 bears the N6-(pyridoxal phosphate)lysine mark. Arg-241 contacts pyridoxal 5'-phosphate. Residues Arg-362 and Arg-374 each contribute to the substrate site.

This sequence belongs to the class-I pyridoxal-phosphate-dependent aminotransferase family. As to quaternary structure, homodimer. It depends on pyridoxal 5'-phosphate as a cofactor. Expressed in roots, cotyledons and flowers.

Its subcellular location is the cytoplasm. It carries out the reaction a 2-oxocarboxylate + L-methionine = 4-methylsulfanyl-2-oxobutanoate + an L-alpha-amino acid. The catalysed reaction is L-tryptophan + 2-oxoglutarate = indole-3-pyruvate + L-glutamate. The enzyme catalyses L-tyrosine + 2-oxoglutarate = 3-(4-hydroxyphenyl)pyruvate + L-glutamate. Coordinates and prevents auxin (IAA) and ethylene biosynthesis, thus regulating auxin homeostasis in young seedlings. Shows aminotransferase activity with methionine; can use the ethylene biosynthetic intermediate L-methionine (L-Met) as an amino donor and the auxin biosynthetic intermediate, indole-3-pyruvic acid (3-IPA) as an amino acceptor to produce L-tryptophan (L-Trp) and 2-oxo-4-methylthiobutyric acid (KMBA). Can also use tryptophan (Trp), phenylalanine (Phe), and tyrosine (Tyr) as substrates. Regulates tryptophan (Trp) homeostasis and catabolism in mature plants. Also possibly involved in the metabolism of other aromatic amino acids and phenylpropanoid homeostasis. In Arabidopsis thaliana (Mouse-ear cress), this protein is Aromatic aminotransferase ISS1.